The chain runs to 179 residues: Cell division protein SepF (179 aa).

The interval Leu-22–Lys-55 is disordered. Positions Thr-33 to Lys-55 are enriched in polar residues.

It belongs to the SepF family. Homodimer. Interacts with FtsZ.

It is found in the cytoplasm. Its function is as follows. Cell division protein that is part of the divisome complex and is recruited early to the Z-ring. Probably stimulates Z-ring formation, perhaps through the cross-linking of FtsZ protofilaments. Its function overlaps with FtsA. The sequence is that of Cell division protein SepF from Streptococcus pneumoniae (strain Taiwan19F-14).